Reading from the N-terminus, the 259-residue chain is Ribosomal RNA small subunit methyltransferase A (259 aa).

Positions 13, 15, 40, 61, 85, and 105 each coordinate S-adenosyl-L-methionine.

It belongs to the class I-like SAM-binding methyltransferase superfamily. rRNA adenine N(6)-methyltransferase family. RsmA subfamily.

The protein resides in the cytoplasm. The catalysed reaction is adenosine(1518)/adenosine(1519) in 16S rRNA + 4 S-adenosyl-L-methionine = N(6)-dimethyladenosine(1518)/N(6)-dimethyladenosine(1519) in 16S rRNA + 4 S-adenosyl-L-homocysteine + 4 H(+). Specifically dimethylates two adjacent adenosines (A1518 and A1519) in the loop of a conserved hairpin near the 3'-end of 16S rRNA in the 30S particle. May play a critical role in biogenesis of 30S subunits. This Mycoplasma genitalium (strain ATCC 33530 / DSM 19775 / NCTC 10195 / G37) (Mycoplasmoides genitalium) protein is Ribosomal RNA small subunit methyltransferase A.